The chain runs to 216 residues: Ras-related protein Rab-11A (216 aa).

Gly-2 is subject to N-acetylglycine. Ser-20, Gly-21, Val-22, Gly-23, Lys-24, Ser-25, Asn-26, Asn-37, Leu-38, Ser-40, Ser-42, and Thr-43 together coordinate GTP. Residue Ser-25 participates in Mg(2+) binding. The short motif at 36–47 (FNLESKSTIGVE) is the Switch 1 element. Mg(2+) is bound by residues Thr-43 and Asp-66. Residues 67–86 (TAGQERYRAITSAYYRGAVG) carry the Switch 2 motif. GTP is bound by residues Gly-69, Asn-124, Lys-125, Asp-127, Ala-155, and Leu-156. Residues 183 to 207 (DRRENDMSPSNNVVPIHVPPTTENK) form a disordered region. 2 S-geranylgeranyl cysteine lipidation sites follow: Cys-212 and Cys-213. At Cys-213 the chain carries Cysteine methyl ester. Residues 214 to 216 (QNI) constitute a propeptide, removed in mature form.

Belongs to the small GTPase superfamily. Rab family. Interacts (GTP-bound form) with RAB11FIPs (via their C-termini) including RAB11FIP1, RAB11FIP2, RAB11FIP3, RAB11FIP4 and RAB11FIP5 effectors. Forms a complex with RAB11FIP3 and dynein intermediate chain DYNC1LI1; the interaction between RAB11A1 and RAB11FIP3 is direct; the complex regulates endocytic trafficking. Interacts with EVI5; EVI5 and RAB11FIP3 may be mutually exclusive and compete for binding RAB11A. Interacts with SGSM1, SGSM2, SGSM3 and VIPAS39. Interacts with EXOC6 in a GTP-dependent manner. Interacts with RAB11FIP5. Interacts with STXBP6. Interacts (GDP-bound form) with ZFYVE27. Interacts with BIRC6/bruce. May interact with TBC1D14. Interacts with UNC119; in a cell cycle-dependent manner. GDP-bound and nucleotide-free forms interact with SH3BP5. Interacts (GDP-bound form) with KIF5A in a ZFYVE27-dependent manner. Interacts (GDP-bound form) with RELCH. Found in a complex composed of RELCH, OSBP1 and RAB11A. Interacts with TBC1D12. Interacts with DEF6. Interacts with ATP9A. Forms a heterotetramer with RAB11FIP3; the GTP-bound form is preferred for binding. Forms a complex with Rabin8/RAB3IP and RAB11FIP3, probably a heterohexamer with two of each protein subunit, where Rabin8/RAB3IP and RAB11FIP3 simultaneously bind to RAB11A; the complex promotes preciliary trafficking and cilia growth. Forms a complex containing RAB11A, ASAP1, Rabin8/RAB3IP, RAP11FIP3 and ARF4; the complex promotes preciliary trafficking; the complex binds to RHO in photoreceptor cells and promotes RHO ciliary transport. Interacts (GTP-bound form) with WDR44; the interaction prevents RAB11A-RAB3IP-RAB11FIP3 complex formation. Mg(2+) serves as cofactor.

The protein resides in the cell membrane. The protein localises to the endosome membrane. Its subcellular location is the recycling endosome membrane. It localises to the cleavage furrow. It is found in the cytoplasmic vesicle. The protein resides in the phagosome. The protein localises to the cytoplasmic vesicle membrane. Its subcellular location is the golgi apparatus. It localises to the trans-Golgi network. The enzyme catalyses GTP + H2O = GDP + phosphate + H(+). With respect to regulation, regulated by guanine nucleotide exchange factors (GEFs) which promote the exchange of bound GDP for free GTP. Regulated by GTPase activating proteins (GAPs) which increase the GTP hydrolysis activity. Inhibited by GDP dissociation inhibitors (GDIs) which prevent Rab-GDP dissociation. The small GTPases Rab are key regulators of intracellular membrane trafficking, from the formation of transport vesicles to their fusion with membranes. Rabs cycle between an inactive GDP-bound form and an active GTP-bound form that is able to recruit to membranes different set of downstream effectors directly responsible for vesicle formation, movement, tethering and fusion. The small Rab GTPase RAB11A regulates endocytic recycling. Forms a functional Rab11/RAB11FIP3/dynein complex that regulates the movement of peripheral sorting endosomes (SE) along microtubule tracks toward the microtubule organizing center/centrosome, generating the endosomal recycling compartment (ERC). Acts as a major regulator of membrane delivery during cytokinesis. Together with MYO5B and RAB8A participates in epithelial cell polarization. Together with Rabin8/RAB3IP, RAB8A, the exocyst complex, PARD3, PRKCI, ANXA2, CDC42 and DNMBP promotes transcytosis of PODXL to the apical membrane initiation sites (AMIS), apical surface formation and lumenogenesis. Together with MYO5B participates in CFTR trafficking to the plasma membrane and TF (Transferrin) recycling in nonpolarized cells. Required in a complex with MYO5B and RAB11FIP2 for the transport of NPC1L1 to the plasma membrane. Participates in the sorting and basolateral transport of CDH1 from the Golgi apparatus to the plasma membrane. Regulates the recycling of FCGRT (receptor of Fc region of monomeric IgG) to basolateral membranes. May also play a role in melanosome transport and release from melanocytes. Promotes Rabin8/RAB3IP preciliary vesicular trafficking to mother centriole by forming a ciliary targeting complex containing Rab11, ASAP1, Rabin8/RAB3IP, RAB11FIP3 and ARF4, thereby regulating ciliogenesis initiation. On the contrary, upon LPAR1 receptor signaling pathway activation, interaction with phosphorylated WDR44 prevents Rab11-RAB3IP-RAB11FIP3 complex formation and cilia growth. Participates in the export of a subset of neosynthesized proteins through a Rab8-Rab10-Rab11-endososomal dependent export route via interaction with WDR44. This is Ras-related protein Rab-11A from Bos taurus (Bovine).